A 165-amino-acid chain; its full sequence is MEKLIERIIYASRWLMFPVYIGLSLGFILLTLKFFQQIIFVIPKILMMSESGLVLVVLSLIDISLVGGLLVMVMFSGYENFISKMEIKTDKKKLGWMGTMDVNSIKNKVASSIVAISSVHSLRLFMDAEKISNDQIMWCVLIHLTFVISAFGMACIDKMSKRGYS.

The next 3 helical transmembrane spans lie at 10 to 32, 53 to 75, and 134 to 156; these read YASRWLMFPVYIGLSLGFILLTL, LVLVVLSLIDISLVGGLLVMVMF, and DQIMWCVLIHLTFVISAFGMACI.

This sequence belongs to the UPF0114 family.

The protein resides in the cell membrane. The chain is UPF0114 protein in repA1-repA2 intergenic region from Buchnera aphidicola subsp. Baizongia pistaciae (strain Bp).